A 390-amino-acid polypeptide reads, in one-letter code: MTADQELQIIVRQGKEPNPTVQDERNSVSSSQAEVSHSNTYKRWLRVTLYTFFVISGQTVATILGRVYYDNGGNSKWLATVVQLVGFPVLLPYYILSFKTHATTDRDGKRTSPRNRVLVYVVLGLLVGADCYLYSIGLLYLPVSTYSLICASQLAFNAFFSYFLNSQKLTPIILNSLFLLTISSTLLAFNNEETDSTKVTKGEYVKGFICTVAASAGYGLVLSLQQLAFLKVLKKQNFSEVMDMIIYVSLVASCVSVVGLFASSEWKTLSSEMDNYKHGKVSYIMNLVWTAVTWQVFSIGGTGLIFELSSLFSNAISVLGLPVVPILAVIIFHDKMNGLKVISMILAIWGFTSYVYQQYLDDKNLKKNHEITTTESPDPPEAEESTWQSK.

10 helical membrane-spanning segments follow: residues 44–64 (WLRVTLYTFFVISGQTVATIL), 78–98 (LATVVQLVGFPVLLPYYILSF), 117–137 (VLVYVVLGLLVGADCYLYSIG), 140–160 (YLPVSTYSLICASQLAFNAFF), 169–189 (LTPIILNSLFLLTISSTLLAF), 204–224 (YVKGFICTVAASAGYGLVLSL), 241–261 (VMDMIIYVSLVASCVSVVGLF), 287–307 (LVWTAVTWQVFSIGGTGLIFE), 312–332 (FSNAISVLGLPVVPILAVIIF), and 336–356 (MNGLKVISMILAIWGFTSYVY). A disordered region spans residues 370–390 (EITTTESPDPPEAEESTWQSK).

It belongs to the purine permeases (TC 2.A.7.14) family.

The protein localises to the membrane. This Arabidopsis thaliana (Mouse-ear cress) protein is Probable purine permease 10 (PUP10).